The primary structure comprises 228 residues: MKKNHLVKYLLISPSLPVGGFCYSEGLESYLKIKNLEEPDHIRNLITNELKIGQIRIEAKCLIEFFDIFVELKIANNINKNRRRLLSLDKWLLSFRDTVEIRDQQTQMAKSLFELTKEFGFEYLYEKNKNISWSLAWSWACFSFQINKLEMIENFIYAWTANQLSAAIRLIPMGSIKAQTIQLELLDLISEVSQEIVDSNINDLYVGNISLSMAQQNHNDLYTKLFRN.

Belongs to the UreF family. UreD, UreF and UreG form a complex that acts as a GTP-hydrolysis-dependent molecular chaperone, activating the urease apoprotein by helping to assemble the nickel containing metallocenter of UreC. The UreE protein probably delivers the nickel.

The protein localises to the cytoplasm. In terms of biological role, required for maturation of urease via the functional incorporation of the urease nickel metallocenter. In Prochlorococcus marinus subsp. pastoris (strain CCMP1986 / NIES-2087 / MED4), this protein is Urease accessory protein UreF.